Consider the following 312-residue polypeptide: GATA zinc finger domain-containing protein 20 (312 aa).

Disordered stretches follow at residues 1-45 and 213-232; these read MGKR…PQQP and TIGS…TNTN. A compositionally biased stretch (low complexity) spans 29-45; the sequence is QQQQQQQEQQPQQPQQP. The segment at 260–287 adopts a GATA-type zinc-finger fold; that stretch reads CYVCGVTETPYWRRGTDEGVMVDLCNAC.

The polypeptide is GATA zinc finger domain-containing protein 20 (gtaT) (Dictyostelium discoideum (Social amoeba)).